Here is a 309-residue protein sequence, read N- to C-terminus: MVKVYAPASSANMSVGFDVLGAAVTPVDGTLLGDVVSVEAADHFRLHNLGRFADKLPPEPRENIVYQCWERFCQALGKTIPVAMTLEKNMPIGSGLGSSACSVVAALVAMNEHCGKPLNDTRLLALMGELEGRISGSIHYDNVAPCFLGGMQLMIEENGIISQQVPGFDEWLWVLAYPGIKVSTAEARAILPAQYRRQDCIAHGRHLAGFIHACYSRQPQLAAALMKDVIAEPYRARLLPGFSQARQAVSEIGALASGISGSGPTLFALCDKPETAQRVADWLSKHYLQNQEGFVHICRLDTAGARVVG.

91-101 lines the ATP pocket; the sequence is PIGSGLGSSAC.

It belongs to the GHMP kinase family. Homoserine kinase subfamily.

The protein localises to the cytoplasm. It catalyses the reaction L-homoserine + ATP = O-phospho-L-homoserine + ADP + H(+). The protein operates within amino-acid biosynthesis; L-threonine biosynthesis; L-threonine from L-aspartate: step 4/5. In terms of biological role, catalyzes the ATP-dependent phosphorylation of L-homoserine to L-homoserine phosphate. This Salmonella agona (strain SL483) protein is Homoserine kinase.